A 229-amino-acid chain; its full sequence is Potassium/proton antiporter CemA (229 aa).

4 helical membrane-spanning segments follow: residues 6–26 (AFIP…ISLC), 107–127 (IFHF…SFWG), 152–172 (FLIL…GWEL), and 189–209 (ILSG…KYWI).

This sequence belongs to the CemA family.

It is found in the plastid. The protein resides in the chloroplast inner membrane. The catalysed reaction is K(+)(in) + H(+)(out) = K(+)(out) + H(+)(in). Functionally, contributes to K(+)/H(+) antiport activity by supporting proton efflux to control proton extrusion and homeostasis in chloroplasts in a light-dependent manner to modulate photosynthesis. Prevents excessive induction of non-photochemical quenching (NPQ) under continuous-light conditions. Indirectly promotes efficient inorganic carbon uptake into chloroplasts. The protein is Potassium/proton antiporter CemA of Aethionema grandiflorum (Persian stone-cress).